Here is a 312-residue protein sequence, read N- to C-terminus: Sulfate adenylyltransferase subunit 2 (312 aa).

It belongs to the PAPS reductase family. CysD subfamily. As to quaternary structure, heterodimer composed of CysD, the smaller subunit, and CysN.

It catalyses the reaction sulfate + ATP + H(+) = adenosine 5'-phosphosulfate + diphosphate. The protein operates within sulfur metabolism; hydrogen sulfide biosynthesis; sulfite from sulfate: step 1/3. Its function is as follows. With CysN forms the ATP sulfurylase (ATPS) that catalyzes the adenylation of sulfate producing adenosine 5'-phosphosulfate (APS) and diphosphate, the first enzymatic step in sulfur assimilation pathway. APS synthesis involves the formation of a high-energy phosphoric-sulfuric acid anhydride bond driven by GTP hydrolysis by CysN coupled to ATP hydrolysis by CysD. The sequence is that of Sulfate adenylyltransferase subunit 2 from Methylobacterium nodulans (strain LMG 21967 / CNCM I-2342 / ORS 2060).